Here is a 332-residue protein sequence, read N- to C-terminus: Biotin synthase (332 aa).

Positions 53 to 282 (HFGKKVKLNM…TKEIRISGGR (230 aa)) constitute a Radical SAM core domain. Positions 71, 75, and 78 each coordinate [4Fe-4S] cluster. C115, C147, C207, and R277 together coordinate [2Fe-2S] cluster.

It belongs to the radical SAM superfamily. Biotin synthase family. In terms of assembly, homodimer. [4Fe-4S] cluster serves as cofactor. Requires [2Fe-2S] cluster as cofactor.

It catalyses the reaction (4R,5S)-dethiobiotin + (sulfur carrier)-SH + 2 reduced [2Fe-2S]-[ferredoxin] + 2 S-adenosyl-L-methionine = (sulfur carrier)-H + biotin + 2 5'-deoxyadenosine + 2 L-methionine + 2 oxidized [2Fe-2S]-[ferredoxin]. The protein operates within cofactor biosynthesis; biotin biosynthesis; biotin from 7,8-diaminononanoate: step 2/2. Catalyzes the conversion of dethiobiotin (DTB) to biotin by the insertion of a sulfur atom into dethiobiotin via a radical-based mechanism. The chain is Biotin synthase from Bacillus cereus (strain ATCC 14579 / DSM 31 / CCUG 7414 / JCM 2152 / NBRC 15305 / NCIMB 9373 / NCTC 2599 / NRRL B-3711).